The following is a 409-amino-acid chain: N-carbamoyl-L-amino acid amidohydrolase (409 aa).

A divalent metal cation is bound by residues histidine 79, aspartate 90, glutamate 125, and histidine 189. The an N-carbamoyl-L-alpha-amino acid site is built by glutamine 192, histidine 225, asparagine 273, arginine 286, and alanine 355. The interval 208–325 is involved in dimerization; it reads GIAGLIWVKF…TTERLQEMAP (118 aa). A divalent metal cation is bound at residue histidine 380.

The protein belongs to the peptidase M20 family. In terms of assembly, homodimer. The cofactor is Mn(2+). It depends on Ni(2+) as a cofactor. Co(2+) serves as cofactor. Requires Fe(2+) as cofactor.

The catalysed reaction is an N-carbamoyl-L-alpha-amino acid + H2O + 2 H(+) = an L-alpha-amino acid + NH4(+) + CO2. The enzyme catalyses N-carbamoyl-L-methionine + H2O + 2 H(+) = L-methionine + NH4(+) + CO2. It catalyses the reaction N-acetyl-L-methionine + H2O = L-methionine + acetate. It carries out the reaction N-carbamoyl-L-alanine + H2O + 2 H(+) = L-alanine + NH4(+) + CO2. The catalysed reaction is N-carbamoyl-L-glutamate + H2O + 2 H(+) = L-glutamate + NH4(+) + CO2. The enzyme catalyses N-carbamoylglycine + H2O + 2 H(+) = glycine + NH4(+) + CO2. It catalyses the reaction N-carbamoyl-L-leucine + H2O + 2 H(+) = L-leucine + NH4(+) + CO2. In terms of biological role, catalyzes the hydrolysis of aliphatic N-carbamoyl-L-alpha-amino acids to free L-alpha-amino acids. Is strictly L-specific since it is inactive toward N-carbamoyl-D-alpha-amino acids. Is not able to use aromatic N-carbamoyl-L-alpha-amino acids like N-carbamoyl-L-tryptophan and N-carbamoyl-L-phenylalanine as substrates, but is also able to hydrolyze N-acetyl-L-methionine. In Geobacillus stearothermophilus (Bacillus stearothermophilus), this protein is N-carbamoyl-L-amino acid amidohydrolase.